The primary structure comprises 406 residues: Argininosuccinate synthase (406 aa).

9–17 (AYSGGLDTS) contributes to the ATP binding site. Residue tyrosine 86 participates in L-citrulline binding. Glycine 116 serves as a coordination point for ATP. L-aspartate-binding residues include threonine 118, asparagine 122, and aspartate 123. Residue asparagine 122 participates in L-citrulline binding. 5 residues coordinate L-citrulline: arginine 126, serine 174, serine 183, glutamate 259, and tyrosine 271.

This sequence belongs to the argininosuccinate synthase family. Type 1 subfamily. In terms of assembly, homotetramer.

The protein resides in the cytoplasm. It carries out the reaction L-citrulline + L-aspartate + ATP = 2-(N(omega)-L-arginino)succinate + AMP + diphosphate + H(+). It participates in amino-acid biosynthesis; L-arginine biosynthesis; L-arginine from L-ornithine and carbamoyl phosphate: step 2/3. The polypeptide is Argininosuccinate synthase (Geobacillus thermodenitrificans (strain NG80-2)).